The chain runs to 431 residues: MTTHKLFLLSLGCSKNTVDSERLMAQAEASGIIFTETADEADTILINTCGFIEDAKEESITEILAAIDKKSEGTIQRLYVMGCLTELYRNELKEEMAEVDGFFGTRELPEILAALGAAYHEELYDHRSLLTPPHYTYLKIAEGCNRSCSFCSIPKIRGRYRSQPVEQLLREAILLKNSGVKELNIISQDISMFGYDTMGKSMLNDLVLRLSDMAFDWIRLLYAYPVNFPLEVIETMRERENICNYLDIPLQHCNDRILKSMNRGINKQESIQLIETVREKNPDIRLRTTMIAGYPGETREEFDELLEFVEANRFDRLGCFPYCHEEYAPSFALEDNVSAEEKQDRVAELMELQESVSQDKNRDFEGKEITVLIDQVEEGMAFGRTEYDAPEVDNECMLETGDFQVEPGMFCHARITDSTPFDLVGEVIGLV.

One can recognise an MTTase N-terminal domain in the interval His-4–His-120. Residues Cys-13, Cys-49, Cys-83, Cys-144, Cys-148, and Cys-151 each contribute to the [4Fe-4S] cluster site. One can recognise a Radical SAM core domain in the interval Leu-130–Asp-359. Positions Arg-362–Gly-429 constitute a TRAM domain.

It belongs to the methylthiotransferase family. RimO subfamily. The cofactor is [4Fe-4S] cluster.

It is found in the cytoplasm. It catalyses the reaction L-aspartate(89)-[ribosomal protein uS12]-hydrogen + (sulfur carrier)-SH + AH2 + 2 S-adenosyl-L-methionine = 3-methylsulfanyl-L-aspartate(89)-[ribosomal protein uS12]-hydrogen + (sulfur carrier)-H + 5'-deoxyadenosine + L-methionine + A + S-adenosyl-L-homocysteine + 2 H(+). Functionally, catalyzes the methylthiolation of an aspartic acid residue of ribosomal protein uS12. This is Ribosomal protein uS12 methylthiotransferase RimO from Pelodictyon phaeoclathratiforme (strain DSM 5477 / BU-1).